The primary structure comprises 417 residues: Sterile alpha motif domain-containing protein 14 (417 aa).

The interval 37–306 (LLVKGRRHRP…QETKCSYPYH (270 aa)) is disordered. The segment covering 40-49 (KGRRHRPSRS) has biased composition (basic residues). Phosphoserine occurs at positions 84 and 108. Residues 138–153 (SGSPPRSAPSSDSSPS) show a composition bias toward low complexity. The segment covering 159 to 173 (PRAEPHSEDDSRDAS) has biased composition (basic and acidic residues). Phosphoserine is present on residues Ser173 and Ser179. 2 stretches are compositionally biased toward low complexity: residues 244-260 (SGKG…PTCS) and 276-289 (STLS…SSSP). The residue at position 279 (Ser279) is a Phosphoserine. Position 283 is a phosphothreonine (Thr283). Residues 326–389 (WTSQQVGQWL…KRKLKELAAA (64 aa)) form the SAM domain. The stretch at 375–416 (DRALVKRKLKELAAAAEKERKAQEKTARQREKLRRREHEAKK) forms a coiled coil. The interval 390–417 (AEKERKAQEKTARQREKLRRREHEAKKS) is disordered.

The polypeptide is Sterile alpha motif domain-containing protein 14 (Samd14) (Rattus norvegicus (Rat)).